The following is a 298-amino-acid chain: GTP cyclohydrolase FolE2 (298 aa).

This sequence belongs to the GTP cyclohydrolase IV family.

The catalysed reaction is GTP + H2O = 7,8-dihydroneopterin 3'-triphosphate + formate + H(+). Its pathway is cofactor biosynthesis; 7,8-dihydroneopterin triphosphate biosynthesis; 7,8-dihydroneopterin triphosphate from GTP: step 1/1. Converts GTP to 7,8-dihydroneopterin triphosphate. This Neisseria meningitidis serogroup C (strain 053442) protein is GTP cyclohydrolase FolE2.